A 291-amino-acid polypeptide reads, in one-letter code: Ribonuclease Z (291 aa).

Positions 61, 63, 65, 66, 133, 201, and 257 each coordinate Zn(2+). Asp-65 functions as the Proton acceptor in the catalytic mechanism.

It belongs to the RNase Z family. In terms of assembly, homodimer. Requires Zn(2+) as cofactor.

It carries out the reaction Endonucleolytic cleavage of RNA, removing extra 3' nucleotides from tRNA precursor, generating 3' termini of tRNAs. A 3'-hydroxy group is left at the tRNA terminus and a 5'-phosphoryl group is left at the trailer molecule.. Functionally, zinc phosphodiesterase, which displays some tRNA 3'-processing endonuclease activity. Probably involved in tRNA maturation, by removing a 3'-trailer from precursor tRNA. This Saccharolobus solfataricus (strain ATCC 35092 / DSM 1617 / JCM 11322 / P2) (Sulfolobus solfataricus) protein is Ribonuclease Z.